The sequence spans 93 residues: Small integral membrane protein 41 (93 aa).

A helical transmembrane segment spans residues 38-58 (VVLGVLSLLVLCGVLFLGGGL). The segment covering 71-80 (REQRASREPE) has biased composition (basic and acidic residues). The tract at residues 71 to 93 (REQRASREPEPGSASGEDGDDDS) is disordered.

The protein localises to the membrane. The sequence is that of Small integral membrane protein 41 from Homo sapiens (Human).